Here is a 240-residue protein sequence, read N- to C-terminus: Uridylate kinase (240 aa).

Residue 12-15 (KLSG) coordinates ATP. Positions 20–25 (GSQGFG) are involved in allosteric activation by GTP. G54 is a UMP binding site. 2 residues coordinate ATP: G55 and R59. Residues D74 and 135-142 (TGNPYFST) each bind UMP. ATP-binding residues include Y168 and D171.

It belongs to the UMP kinase family. As to quaternary structure, homohexamer.

The protein localises to the cytoplasm. The catalysed reaction is UMP + ATP = UDP + ADP. It participates in pyrimidine metabolism; CTP biosynthesis via de novo pathway; UDP from UMP (UMPK route): step 1/1. With respect to regulation, allosterically activated by GTP. Inhibited by UTP. Its function is as follows. Catalyzes the reversible phosphorylation of UMP to UDP. The protein is Uridylate kinase of Desulfitobacterium hafniense (strain Y51).